Consider the following 415-residue polypeptide: Protein fuzzy homolog (415 aa).

It belongs to the fuzzy family. Component of the CPLANE (ciliogenesis and planar polarity effectors) complex, composed of INTU, FUZ and WDPCP. Interacts with CPLANE1. Interacts with CPLANE2. Expressed in dermal and epidermal cells.

The protein localises to the cytoplasm. It is found in the cytoskeleton. The protein resides in the cilium basal body. Probable planar cell polarity effector involved in cilium biogenesis. May regulate protein and membrane transport to the cilium. Proposed to function as core component of the CPLANE (ciliogenesis and planar polarity effectors) complex involved in the recruitment of peripheral IFT-A proteins to basal bodies. May regulate the morphogenesis of hair follicles which depends on functional primary cilia. Binds phosphatidylinositol 3-phosphate with highest affinity, followed by phosphatidylinositol 4-phosphate and phosphatidylinositol 5-phosphate. This Mus musculus (Mouse) protein is Protein fuzzy homolog (Fuz).